The primary structure comprises 431 residues: Serine hydroxymethyltransferase 2 (431 aa).

Residues L131 and 135-137 (GHL) contribute to the (6S)-5,6,7,8-tetrahydrofolate site. The residue at position 240 (K240) is an N6-(pyridoxal phosphate)lysine. Position 256 (E256) interacts with (6S)-5,6,7,8-tetrahydrofolate.

Belongs to the SHMT family. As to quaternary structure, homodimer. It depends on pyridoxal 5'-phosphate as a cofactor.

The protein localises to the cytoplasm. It catalyses the reaction (6R)-5,10-methylene-5,6,7,8-tetrahydrofolate + glycine + H2O = (6S)-5,6,7,8-tetrahydrofolate + L-serine. Its pathway is one-carbon metabolism; tetrahydrofolate interconversion. It functions in the pathway amino-acid biosynthesis; glycine biosynthesis; glycine from L-serine: step 1/1. Catalyzes the reversible interconversion of serine and glycine with tetrahydrofolate (THF) serving as the one-carbon carrier. This reaction serves as the major source of one-carbon groups required for the biosynthesis of purines, thymidylate, methionine, and other important biomolecules. Also exhibits THF-independent aldolase activity toward beta-hydroxyamino acids, producing glycine and aldehydes, via a retro-aldol mechanism. This chain is Serine hydroxymethyltransferase 2, found in Vibrio vulnificus (strain YJ016).